The sequence spans 462 residues: Arginine biosynthesis bifunctional protein ArgJ, mitochondrial (462 aa).

Residues Thr-189, Lys-215, Thr-236, Glu-327, Asn-457, and Ser-462 each contribute to the substrate site. The Nucleophile role is filled by Thr-236.

It belongs to the ArgJ family. Heterodimer of an alpha and a beta chain. The alpha and beta chains are autoproteolytically processed from a single precursor protein within the mitochondrion.

It is found in the mitochondrion matrix. It catalyses the reaction N(2)-acetyl-L-ornithine + L-glutamate = N-acetyl-L-glutamate + L-ornithine. The enzyme catalyses L-glutamate + acetyl-CoA = N-acetyl-L-glutamate + CoA + H(+). It participates in amino-acid biosynthesis; L-arginine biosynthesis; L-ornithine and N-acetyl-L-glutamate from L-glutamate and N(2)-acetyl-L-ornithine (cyclic): step 1/1. It functions in the pathway amino-acid biosynthesis; L-arginine biosynthesis; N(2)-acetyl-L-ornithine from L-glutamate: step 1/4. In terms of biological role, catalyzes two activities which are involved in the cyclic version of arginine biosynthesis: the synthesis of acetylglutamate from glutamate and acetyl-CoA, and of ornithine by transacetylation between acetylornithine and glutamate. The sequence is that of Arginine biosynthesis bifunctional protein ArgJ, mitochondrial from Postia placenta (strain ATCC 44394 / Madison 698-R) (Brown rot fungus).